Here is a 110-residue protein sequence, read N- to C-terminus: T cell receptor alpha variable 35 (110 aa).

Positions 1 to 19 (MLLEHLLIILWMQLTWVSG) are cleaved as a signal peptide. Residues 20–110 (QQLNQSPQSM…DVGIYFCAGQ (91 aa)) enclose the Ig-like domain. Asn-40 and Asn-93 each carry an N-linked (GlcNAc...) asparagine glycan. An intrachain disulfide couples Cys-41 to Cys-107.

Alpha-beta TR is a heterodimer composed of an alpha and beta chain; disulfide-linked. The alpha-beta TR is associated with the transmembrane signaling CD3 coreceptor proteins to form the TR-CD3 (TcR or TCR). The assembly of alpha-beta TR heterodimers with CD3 occurs in the endoplasmic reticulum where a single alpha-beta TR heterodimer associates with one CD3D-CD3E heterodimer, one CD3G-CD3E heterodimer and one CD247 homodimer forming a stable octameric structure. CD3D-CD3E and CD3G-CD3E heterodimers preferentially associate with TR alpha and TR beta chains, respectively. The association of the CD247 homodimer is the last step of TcR assembly in the endoplasmic reticulum and is required for transport to the cell surface.

Its subcellular location is the cell membrane. In terms of biological role, v region of the variable domain of T cell receptor (TR) alpha chain that participates in the antigen recognition. Alpha-beta T cell receptors are antigen specific receptors which are essential to the immune response and are present on the cell surface of T lymphocytes. Recognize peptide-major histocompatibility (MH) (pMH) complexes that are displayed by antigen presenting cells (APC), a prerequisite for efficient T cell adaptive immunity against pathogens. Binding of alpha-beta TR to pMH complex initiates TR-CD3 clustering on the cell surface and intracellular activation of LCK that phosphorylates the ITAM motifs of CD3G, CD3D, CD3E and CD247 enabling the recruitment of ZAP70. In turn ZAP70 phosphorylates LAT, which recruits numerous signaling molecules to form the LAT signalosome. The LAT signalosome propagates signal branching to three major signaling pathways, the calcium, the mitogen-activated protein kinase (MAPK) kinase and the nuclear factor NF-kappa-B (NF-kB) pathways, leading to the mobilization of transcription factors that are critical for gene expression and essential for T cell growth and differentiation. The T cell repertoire is generated in the thymus, by V-(D)-J rearrangement. This repertoire is then shaped by intrathymic selection events to generate a peripheral T cell pool of self-MH restricted, non-autoaggressive T cells. Post-thymic interaction of alpha-beta TR with the pMH complexes shapes TR structural and functional avidity. This Homo sapiens (Human) protein is T cell receptor alpha variable 35.